The following is a 711-amino-acid chain: Consortin (711 aa).

Disordered regions lie at residues 1-157 (MDDS…NDPP), 294-332 (AVGT…GCHQ), 370-389 (ETAG…KDSS), 394-432 (PPTE…PGLI), and 457-496 (PRDQ…ESAL). Over 1–650 (MDDSDPPTYS…LEQDEVGGGS (650 aa)) the chain is Cytoplasmic. Residues 63–77 (VSEQDSLNNNESFPS) show a composition bias toward polar residues. Residues 109-120 (PAKRSPRAKKSS) are compositionally biased toward basic residues. 2 stretches are compositionally biased toward basic and acidic residues: residues 396-407 (TEDHCGVARDPK) and 457-471 (PRDQ…EPRQ). Polar residues predominate over residues 478-487 (DGKSAQSQAG). The helical transmembrane segment at 651-671 (CILLILLCIATVFLSVGGTAL) threads the bilayer. Residues 672 to 711 (YCTLGNIESPVCTDFADNVDFYYTKLLQGVAGLKHWVYLS) are Extracellular-facing.

It belongs to the CNST family. As to quaternary structure, interacts with connexins GJA1/CX43, GJB1/CX32, GJB2/CX26, GJB3/CX31, GJB6/CX30 and GJC1/CX45. Also interacts with GGA1 and GGA2. Does not interact with PANX1.

It is found in the cell membrane. It localises to the golgi apparatus. Its subcellular location is the trans-Golgi network membrane. The protein localises to the cytoplasmic vesicle. The protein resides in the secretory vesicle. Its function is as follows. Required for targeting of connexins to the plasma membrane. This chain is Consortin (Cnst), found in Mus musculus (Mouse).